The following is a 285-amino-acid chain: MPPAVRQGMRTVGTLRVTRPSSYVLSSREFSVLNRPPPNYPGHIPLTTIERGALAVGSAIGSLLNPRRADLIAALGEATATPYFIYRLRDAMLSNPTGRRILRDRPRISSKTLSVEYLRSLPPNSVGRTYVSWLDREGVGPDTRETVRYIDDEECAYVMQRYRECHDFYHAVTGLPIVVEGEVSLKTFEFANTLLPMTGLSMFAVMRLKPEERERYWKLHLPWAVRSGLASKEVINVYWEEELERDVNELREKLGIEKPPDLREIRKMMRRQKKAAKAAREKFEN.

The transit peptide at 1–11 (MPPAVRQGMRT) directs the protein to the mitochondrion. The Zn(2+) site is built by His-166, Asp-167, His-170, and Glu-182.

This sequence belongs to the COQ4 family. In terms of assembly, component of a multi-subunit COQ enzyme complex, composed of at least COQ3, COQ4, COQ5, COQ6, COQ7 and COQ9. Zn(2+) serves as cofactor.

Its subcellular location is the mitochondrion inner membrane. The catalysed reaction is a 4-hydroxy-3-methoxy-5-(all-trans-polyprenyl)benzoate + H(+) = a 2-methoxy-6-(all-trans-polyprenyl)phenol + CO2. The protein operates within cofactor biosynthesis; ubiquinone biosynthesis. Lyase that catalyzes the C1-decarboxylation of 4-hydroxy-3-methoxy-5-(all-trans-polyprenyl)benzoic acid into 2-methoxy-6-(all-trans-polyprenyl)phenol during ubiquinone biosynthesis. This Paracoccidioides lutzii (strain ATCC MYA-826 / Pb01) (Paracoccidioides brasiliensis) protein is Ubiquinone biosynthesis protein COQ4, mitochondrial.